Here is an 871-residue protein sequence, read N- to C-terminus: uncharacterized protein (871 aa).

Transmembrane regions (helical) follow at residues 11 to 31 (AFVS…GLFL), 92 to 112 (YLFT…PILL), 139 to 159 (FYAH…IIYR), 380 to 400 (TILT…GCIS), 422 to 442 (LLGI…MSLV), 475 to 495 (VQVF…VQVI), 520 to 540 (FLLQ…TLLL), 562 to 582 (LSAP…TIMI), 586 to 606 (IIAP…YFAY), 629 to 649 (LFQV…LFVL), and 653 to 673 (WGAT…HLYF). A phosphoserine mark is found at Ser725, Ser726, Ser727, Ser729, Ser737, and Ser761. A compositionally biased stretch (polar residues) spans 727–740 (SGSDEFLETSSRTS). Positions 727 to 746 (SGSDEFLETSSRTSENTKEK) are disordered.

This sequence belongs to the CSC1 (TC 1.A.17) family.

Its subcellular location is the golgi apparatus membrane. Functionally, acts as an osmosensitive calcium-permeable cation channel. This is an uncharacterized protein from Schizosaccharomyces pombe (strain 972 / ATCC 24843) (Fission yeast).